The sequence spans 96 residues: Co-chaperonin GroES (96 aa).

The protein belongs to the GroES chaperonin family. Heptamer of 7 subunits arranged in a ring. Interacts with the chaperonin GroEL.

The protein resides in the cytoplasm. In terms of biological role, together with the chaperonin GroEL, plays an essential role in assisting protein folding. The GroEL-GroES system forms a nano-cage that allows encapsulation of the non-native substrate proteins and provides a physical environment optimized to promote and accelerate protein folding. GroES binds to the apical surface of the GroEL ring, thereby capping the opening of the GroEL channel. In Geobacter sp. (strain M21), this protein is Co-chaperonin GroES.